Consider the following 267-residue polypeptide: Undecaprenyl-diphosphatase 1 (267 aa).

Transmembrane regions (helical) follow at residues 6–26 (VLVV…AAGL), 41–60 (AALS…IYFW), 83–103 (HLLL…WLVL), 109–129 (LVGQ…LWGC), 142–162 (MSWV…VPGV), 185–205 (FSML…FWGL), 217–237 (LLMA…GMMA), and 244–264 (FVPF…LVYF).

This sequence belongs to the UppP family.

It localises to the cell inner membrane. It catalyses the reaction di-trans,octa-cis-undecaprenyl diphosphate + H2O = di-trans,octa-cis-undecaprenyl phosphate + phosphate + H(+). Catalyzes the dephosphorylation of undecaprenyl diphosphate (UPP). Confers resistance to bacitracin. This is Undecaprenyl-diphosphatase 1 from Paramagnetospirillum magneticum (strain ATCC 700264 / AMB-1) (Magnetospirillum magneticum).